The chain runs to 127 residues: Small ribosomal subunit protein uS13 (127 aa).

The disordered stretch occupies residues 97 to 127 (PVRGQRTRTNARTRRGRRVTVAGKKKAPSKK). Positions 101-127 (QRTRTNARTRRGRRVTVAGKKKAPSKK) are enriched in basic residues.

This sequence belongs to the universal ribosomal protein uS13 family. Part of the 30S ribosomal subunit. Forms a loose heterodimer with protein S19. Forms two bridges to the 50S subunit in the 70S ribosome.

Located at the top of the head of the 30S subunit, it contacts several helices of the 16S rRNA. In the 70S ribosome it contacts the 23S rRNA (bridge B1a) and protein L5 of the 50S subunit (bridge B1b), connecting the 2 subunits; these bridges are implicated in subunit movement. Contacts the tRNAs in the A and P-sites. The polypeptide is Small ribosomal subunit protein uS13 (Microcystis aeruginosa (strain NIES-843 / IAM M-2473)).